A 483-amino-acid chain; its full sequence is MTTLAVLSVASELFPLIKTGGLADVAGALPAALRANDVAVTSLLPGYPAVLGGIEDPQQVHSFNELFGGTARLLAARCGDLDLFVLDAPHLYVRPGNPYVGPDGKDWPDNGLRFAALAQVGAALGQGLLPHYKPDVLHAHDWQTGLLPAYLKYSGRPGPKTVFTIHNLAFQGRFPYELLGRLGLPERAFGLDGIEYYGGIGYLKAGLQLADRITTVSPTYAAEIQGSEAGMGLDGLLRLRADRLSGILNGIDTDVWNPASDALISATYDVESIAARARNKKVLQARFGLKPEPGALLYGVISRLSWQKGLDLLLEALPQLIGGGAQLALLGSGDAELEQGYAAAARKYPGQVGAVIGYDEALAHQIQAGADALLVPSRFEPCGLTQLCALRYGAVPVVARVGGLADTVVDANEMATATGVATGVQFAPVTTDALIKAFGKTRALFADVVAWRNLQINGMTTDVSWKNPAQHYAKLYRDLVAER.

Lys-18 is a binding site for ADP-alpha-D-glucose.

Belongs to the glycosyltransferase 1 family. Bacterial/plant glycogen synthase subfamily.

It catalyses the reaction [(1-&gt;4)-alpha-D-glucosyl](n) + ADP-alpha-D-glucose = [(1-&gt;4)-alpha-D-glucosyl](n+1) + ADP + H(+). The protein operates within glycan biosynthesis; glycogen biosynthesis. Synthesizes alpha-1,4-glucan chains using ADP-glucose. The sequence is that of Glycogen synthase from Rhodopseudomonas palustris (strain ATCC BAA-98 / CGA009).